The sequence spans 1211 residues: DNA-directed RNA polymerase subunit beta' (1211 aa).

Residues Cys60, Cys62, Cys75, and Cys78 each coordinate Zn(2+). Mg(2+)-binding residues include Asp449, Asp451, and Asp453. The Zn(2+) site is built by Cys818, Cys892, Cys899, and Cys902.

The protein belongs to the RNA polymerase beta' chain family. As to quaternary structure, the RNAP catalytic core consists of 2 alpha, 1 beta, 1 beta' and 1 omega subunit. When a sigma factor is associated with the core the holoenzyme is formed, which can initiate transcription. Requires Mg(2+) as cofactor. The cofactor is Zn(2+).

It catalyses the reaction RNA(n) + a ribonucleoside 5'-triphosphate = RNA(n+1) + diphosphate. Its function is as follows. DNA-dependent RNA polymerase catalyzes the transcription of DNA into RNA using the four ribonucleoside triphosphates as substrates. In Limosilactobacillus reuteri (strain DSM 20016) (Lactobacillus reuteri), this protein is DNA-directed RNA polymerase subunit beta'.